A 95-amino-acid polypeptide reads, in one-letter code: Co-chaperonin GroES (95 aa).

The protein belongs to the GroES chaperonin family. Heptamer of 7 subunits arranged in a ring. Interacts with the chaperonin GroEL.

The protein resides in the cytoplasm. Together with the chaperonin GroEL, plays an essential role in assisting protein folding. The GroEL-GroES system forms a nano-cage that allows encapsulation of the non-native substrate proteins and provides a physical environment optimized to promote and accelerate protein folding. GroES binds to the apical surface of the GroEL ring, thereby capping the opening of the GroEL channel. In Bordetella bronchiseptica (strain ATCC BAA-588 / NCTC 13252 / RB50) (Alcaligenes bronchisepticus), this protein is Co-chaperonin GroES.